A 682-amino-acid polypeptide reads, in one-letter code: Potassium-transporting ATPase ATP-binding subunit (682 aa).

Transmembrane regions (helical) follow at residues 34–54 (PVMFIVWIGSLLTTCISIAMA), 62–82 (ALFSAAISGWLWITVLFANFA), 219–239 (IALTILLIALTIVFLLATATL), and 254–274 (VLVALLVCLIPTTIGGLLSAI). D307 functions as the 4-aspartylphosphate intermediate in the catalytic mechanism. Residues D344, E348, 377 to 384 (FTAQSRMS), and K395 each bind ATP. Positions 518 and 522 each coordinate Mg(2+). 3 helical membrane-spanning segments follow: residues 588 to 608 (FAIIPAAFAATYPQLNALNIM), 616 to 636 (AILSAVIFNALIIVFLIPLAL), and 656 to 676 (IYGLGGLLVPFIGIKVIDLLL).

The protein belongs to the cation transport ATPase (P-type) (TC 3.A.3) family. Type IA subfamily. As to quaternary structure, the system is composed of three essential subunits: KdpA, KdpB and KdpC.

It localises to the cell inner membrane. The enzyme catalyses K(+)(out) + ATP + H2O = K(+)(in) + ADP + phosphate + H(+). In terms of biological role, part of the high-affinity ATP-driven potassium transport (or Kdp) system, which catalyzes the hydrolysis of ATP coupled with the electrogenic transport of potassium into the cytoplasm. This subunit is responsible for energy coupling to the transport system and for the release of the potassium ions to the cytoplasm. This Escherichia coli O9:H4 (strain HS) protein is Potassium-transporting ATPase ATP-binding subunit.